The chain runs to 426 residues: Putative 3-oxoacyl-[acyl-carrier-protein] synthase, mitochondrial (426 aa).

The transit peptide at 1 to 18 (MKRVVITGLGAVTPLGNG) directs the protein to the mitochondrion. The 405-residue stretch at 19–423 (VKTNWRNLIQ…GTNASLCFKK (405 aa)) folds into the Ketosynthase family 3 (KS3) domain. Active-site for beta-ketoacyl synthase activity residues include cysteine 170, histidine 311, and histidine 351.

It belongs to the thiolase-like superfamily. Beta-ketoacyl-ACP synthases family.

The protein resides in the mitochondrion. It catalyses the reaction a fatty acyl-[ACP] + malonyl-[ACP] + H(+) = a 3-oxoacyl-[ACP] + holo-[ACP] + CO2. It carries out the reaction butanoyl-[ACP] + malonyl-[ACP] + H(+) = 3-oxohexanoyl-[ACP] + holo-[ACP] + CO2. The catalysed reaction is hexanoyl-[ACP] + malonyl-[ACP] + H(+) = 3-oxooctanoyl-[ACP] + holo-[ACP] + CO2. The enzyme catalyses octanoyl-[ACP] + malonyl-[ACP] + H(+) = 3-oxodecanoyl-[ACP] + holo-[ACP] + CO2. It catalyses the reaction decanoyl-[ACP] + malonyl-[ACP] + H(+) = 3-oxododecanoyl-[ACP] + holo-[ACP] + CO2. It carries out the reaction dodecanoyl-[ACP] + malonyl-[ACP] + H(+) = 3-oxotetradecanoyl-[ACP] + holo-[ACP] + CO2. The catalysed reaction is tetradecanoyl-[ACP] + malonyl-[ACP] + H(+) = 3-oxohexadecanoyl-[ACP] + holo-[ACP] + CO2. Its pathway is lipid metabolism; fatty acid biosynthesis. In terms of biological role, may play a role in the biosynthesis of lipoic acid as well as longer chain fatty acids required for optimal mitochondrial function. The polypeptide is Putative 3-oxoacyl-[acyl-carrier-protein] synthase, mitochondrial (Schizosaccharomyces pombe (strain 972 / ATCC 24843) (Fission yeast)).